The following is a 194-amino-acid chain: Large ribosomal subunit protein bL17 (194 aa).

Positions 126 to 194 (AEPKQTKART…SPEQTNKQEE (69 aa)) are disordered. Positions 131 to 140 (TKARTRRGKG) are enriched in basic residues. 2 stretches are compositionally biased toward polar residues: residues 144–161 (ATTTVSSEKTQPNTQDMA) and 181–194 (LDTQSPEQTNKQEE).

The protein belongs to the bacterial ribosomal protein bL17 family. In terms of assembly, part of the 50S ribosomal subunit. Contacts protein L32.

This is Large ribosomal subunit protein bL17 from Amoebophilus asiaticus (strain 5a2).